A 230-amino-acid polypeptide reads, in one-letter code: PsbP-like protein 1, chloroplastic (230 aa).

Belongs to the PsbP family.

The protein localises to the plastid. Its subcellular location is the chloroplast thylakoid lumen. In terms of biological role, required for efficient repair of photodamaged PSII, but not tightly associated with the complex. This chain is PsbP-like protein 1, chloroplastic (PPL1), found in Arabidopsis thaliana (Mouse-ear cress).